Reading from the N-terminus, the 236-residue chain is uncharacterized protein (236 aa).

This is an uncharacterized protein from Sus scrofa (Pig).